The following is a 182-amino-acid chain: Ribulose bisphosphate carboxylase small subunit, chloroplastic (182 aa).

The transit peptide at 1–58 directs the protein to the chloroplast; sequence MASSMISSATVATVSRATPAQATMVAPFTGLKSTAAFPATRKSNNDITSLASNGGRVQ.

Belongs to the RuBisCO small chain family. As to quaternary structure, heterohexadecamer of 8 large and 8 small subunits.

The protein resides in the plastid. It localises to the chloroplast. Its function is as follows. RuBisCO catalyzes two reactions: the carboxylation of D-ribulose 1,5-bisphosphate, the primary event in carbon dioxide fixation, as well as the oxidative fragmentation of the pentose substrate. Both reactions occur simultaneously and in competition at the same active site. Although the small subunit is not catalytic it is essential for maximal activity. This chain is Ribulose bisphosphate carboxylase small subunit, chloroplastic, found in Fagus crenata (Japanese beech).